The primary structure comprises 428 residues: 26S proteasome regulatory subunit 6B homolog (428 aa).

Met-1 carries the post-translational modification N-acetylmethionine. 213-220 (GPPGTGKT) contributes to the ATP binding site. Lys-280 participates in a covalent cross-link: Glycyl lysine isopeptide (Lys-Gly) (interchain with G-Cter in ubiquitin).

It belongs to the AAA ATPase family. Post-translationally, N-acetylated by NAT3.

The protein localises to the cytoplasm. The protein resides in the nucleus. Its function is as follows. The 26S proteasome is involved in the ATP-dependent degradation of ubiquitinated proteins. The regulatory (or ATPase) complex confers ATP dependency and substrate specificity to the 26S complex. This is 26S proteasome regulatory subunit 6B homolog (RPT3) from Saccharomyces cerevisiae (strain ATCC 204508 / S288c) (Baker's yeast).